Consider the following 573-residue polypeptide: Leucine aminopeptidase, chloroplastic (573 aa).

The transit peptide at 1-53 (MATLRVSSLLASSPSSLHCNPSVFTKCQSSPRWAFSFSVTPLCSRRSKRIVHC) directs the protein to the chloroplast. Positions 342 and 347 each coordinate Mn(2+). Lysine 354 is a catalytic residue. Aspartate 367, aspartate 427, and glutamate 429 together coordinate Mn(2+). Arginine 431 is an active-site residue.

It belongs to the peptidase M17 family. Homohexamer (dimer of homotrimers). Mn(2+) serves as cofactor. In tubers and floral buds of untreated plants. After abscisic acid (ABA) treatment or mechanical wounding is mostly accumulated in leaves, to a lesser extent in stems, but not in roots.

The protein resides in the plastid. The protein localises to the chloroplast. It carries out the reaction Release of an N-terminal amino acid, Xaa-|-Yaa-, in which Xaa is preferably Leu, but may be other amino acids including Pro although not Arg or Lys, and Yaa may be Pro. Amino acid amides and methyl esters are also readily hydrolyzed, but rates on arylamides are exceedingly low.. The enzyme catalyses Release of N-terminal proline from a peptide.. Functionally, presumably involved in the processing and regular turnover of intracellular proteins. The protein is Leucine aminopeptidase, chloroplastic (LAP) of Solanum tuberosum (Potato).